Here is a 430-residue protein sequence, read N- to C-terminus: Serine--tRNA ligase (430 aa).

Residue 237 to 239 coordinates L-serine; sequence TAE. An ATP-binding site is contributed by 268–270; sequence RSE. Glu-291 contacts L-serine. 355-358 is a binding site for ATP; sequence EISS. Ser-391 provides a ligand contact to L-serine.

This sequence belongs to the class-II aminoacyl-tRNA synthetase family. Type-1 seryl-tRNA synthetase subfamily. Homodimer. The tRNA molecule binds across the dimer.

The protein localises to the cytoplasm. It catalyses the reaction tRNA(Ser) + L-serine + ATP = L-seryl-tRNA(Ser) + AMP + diphosphate + H(+). The enzyme catalyses tRNA(Sec) + L-serine + ATP = L-seryl-tRNA(Sec) + AMP + diphosphate + H(+). Its pathway is aminoacyl-tRNA biosynthesis; selenocysteinyl-tRNA(Sec) biosynthesis; L-seryl-tRNA(Sec) from L-serine and tRNA(Sec): step 1/1. Its function is as follows. Catalyzes the attachment of serine to tRNA(Ser). Is also able to aminoacylate tRNA(Sec) with serine, to form the misacylated tRNA L-seryl-tRNA(Sec), which will be further converted into selenocysteinyl-tRNA(Sec). The polypeptide is Serine--tRNA ligase (Enterobacter sp. (strain 638)).